We begin with the raw amino-acid sequence, 183 residues long: Oligoribonuclease (183 aa).

Positions 8–171 (LIWLDLEMTG…QDIRDSIEEL (164 aa)) constitute an Exonuclease domain. Tyr-129 is an active-site residue.

Belongs to the oligoribonuclease family.

The protein resides in the cytoplasm. Its function is as follows. 3'-to-5' exoribonuclease specific for small oligoribonucleotides. The polypeptide is Oligoribonuclease (Coxiella burnetii (strain RSA 493 / Nine Mile phase I)).